The following is a 448-amino-acid chain: Glucose-6-phosphate isomerase (448 aa).

Catalysis depends on E290, which acts as the Proton donor. Residues H311 and K425 contribute to the active site.

This sequence belongs to the GPI family.

It is found in the cytoplasm. It carries out the reaction alpha-D-glucose 6-phosphate = beta-D-fructose 6-phosphate. It functions in the pathway carbohydrate biosynthesis; gluconeogenesis. It participates in carbohydrate degradation; glycolysis; D-glyceraldehyde 3-phosphate and glycerone phosphate from D-glucose: step 2/4. In terms of biological role, catalyzes the reversible isomerization of glucose-6-phosphate to fructose-6-phosphate. The sequence is that of Glucose-6-phosphate isomerase from Lactococcus lactis subsp. cremoris (strain SK11).